Consider the following 991-residue polypeptide: Receptor-like protein kinase HAIKU2 (991 aa).

The first 19 residues, 1–19 (MLRLLFIVRLLFLMPLASS), serve as a signal peptide directing secretion. The Extracellular portion of the chain corresponds to 20 to 616 (RSNHSEEVEN…KRKHLSKVDM (597 aa)). N22 carries N-linked (GlcNAc...) asparagine glycosylation. 21 LRR repeats span residues 66-90 (DGNV…RFTD), 99-123 (LKLL…LGKC), 125-148 (RLRY…SLQL), 150-170 (EFLS…SLKD), 171-196 (LKRL…ILNL), 197-220 (TALQ…IKNL), 221-244 (VRLQ…IVQL), 246-267 (NLRQ…GFRN), 269-291 (TNLR…LRFL), 292-314 (KNLV…EFGD), 315-339 (FKSL…LGSW), 341-363 (AFKY…MCKK), 365-387 (VMTH…YAKC), 388-411 (KTLI…IWGL), 413-435 (NLQF…IGNA), 436-459 (KSLG…ISGA), 461-482 (SLVS…SFGK), 483-508 (LKEL…GLCT), 510-531 (LVDL…LGSL), 532-554 (KLLN…GLSA), and 555-578 (LKLS…LVSG). Residues N109, N135, N155, N195, and N206 are each glycosylated (N-linked (GlcNAc...) asparagine). N-linked (GlcNAc...) asparagine glycosylation is found at N267 and N278. 2 N-linked (GlcNAc...) asparagine glycosylation sites follow: N397 and N427. N495 carries N-linked (GlcNAc...) asparagine glycosylation. A glycan (N-linked (GlcNAc...) asparagine) is linked at N538. Residues 617 to 637 (CFIVAAILALFFLFSYVIFKI) traverse the membrane as a helical segment. Topologically, residues 638-991 (RRDKLNKTVQ…SANDEITKVV (354 aa)) are cytoplasmic. A Protein kinase domain is found at 671-970 (IKSENIIGRG…SMLEKIEPSY (300 aa)). ATP-binding positions include 677 to 685 (IGRGGQGNV) and K699. Phosphotyrosine occurs at positions 762 and 801. D814 (proton acceptor) is an active-site residue. Y859 and Y866 each carry phosphotyrosine. Position 867 is a phosphothreonine (T867). The segment at 972-991 (KNSGEASYGESANDEITKVV) is disordered.

Belongs to the protein kinase superfamily. Ser/Thr protein kinase family. Expressed in the endosperm of fertilized ovules.

The protein localises to the membrane. It carries out the reaction L-seryl-[protein] + ATP = O-phospho-L-seryl-[protein] + ADP + H(+). The enzyme catalyses L-threonyl-[protein] + ATP = O-phospho-L-threonyl-[protein] + ADP + H(+). Functionally, modulates the seed size by negatively regulating the cellularization of syncytial endosperm. This is Receptor-like protein kinase HAIKU2 (IKU2) from Arabidopsis thaliana (Mouse-ear cress).